Consider the following 221-residue polypeptide: Protein-L-isoaspartate O-methyltransferase (221 aa).

Residue serine 70 is part of the active site.

It belongs to the methyltransferase superfamily. L-isoaspartyl/D-aspartyl protein methyltransferase family.

The protein localises to the cytoplasm. It catalyses the reaction [protein]-L-isoaspartate + S-adenosyl-L-methionine = [protein]-L-isoaspartate alpha-methyl ester + S-adenosyl-L-homocysteine. Functionally, catalyzes the methyl esterification of L-isoaspartyl residues in peptides and proteins that result from spontaneous decomposition of normal L-aspartyl and L-asparaginyl residues. It plays a role in the repair and/or degradation of damaged proteins. In Alkalilimnicola ehrlichii (strain ATCC BAA-1101 / DSM 17681 / MLHE-1), this protein is Protein-L-isoaspartate O-methyltransferase.